A 231-amino-acid polypeptide reads, in one-letter code: Phosphoribosylformylglycinamidine synthase subunit PurQ (231 aa).

Positions 7–231 constitute a Glutamine amidotransferase type-1 domain; sequence GVVVFPGSNC…RLFASLFRQL (225 aa). The active-site Nucleophile is the C89. Residues H206 and E208 contribute to the active site.

Part of the FGAM synthase complex composed of 1 PurL, 1 PurQ and 2 PurS subunits.

The protein resides in the cytoplasm. The enzyme catalyses N(2)-formyl-N(1)-(5-phospho-beta-D-ribosyl)glycinamide + L-glutamine + ATP + H2O = 2-formamido-N(1)-(5-O-phospho-beta-D-ribosyl)acetamidine + L-glutamate + ADP + phosphate + H(+). It carries out the reaction L-glutamine + H2O = L-glutamate + NH4(+). It functions in the pathway purine metabolism; IMP biosynthesis via de novo pathway; 5-amino-1-(5-phospho-D-ribosyl)imidazole from N(2)-formyl-N(1)-(5-phospho-D-ribosyl)glycinamide: step 1/2. Functionally, part of the phosphoribosylformylglycinamidine synthase complex involved in the purines biosynthetic pathway. Catalyzes the ATP-dependent conversion of formylglycinamide ribonucleotide (FGAR) and glutamine to yield formylglycinamidine ribonucleotide (FGAM) and glutamate. The FGAM synthase complex is composed of three subunits. PurQ produces an ammonia molecule by converting glutamine to glutamate. PurL transfers the ammonia molecule to FGAR to form FGAM in an ATP-dependent manner. PurS interacts with PurQ and PurL and is thought to assist in the transfer of the ammonia molecule from PurQ to PurL. In Chlorobium luteolum (strain DSM 273 / BCRC 81028 / 2530) (Pelodictyon luteolum), this protein is Phosphoribosylformylglycinamidine synthase subunit PurQ.